A 1372-amino-acid polypeptide reads, in one-letter code: DNA-directed RNA polymerase subunit beta (1372 aa).

It belongs to the RNA polymerase beta chain family. The RNAP catalytic core consists of 2 alpha, 1 beta, 1 beta' and 1 omega subunit. When a sigma factor is associated with the core the holoenzyme is formed, which can initiate transcription.

It catalyses the reaction RNA(n) + a ribonucleoside 5'-triphosphate = RNA(n+1) + diphosphate. In terms of biological role, DNA-dependent RNA polymerase catalyzes the transcription of DNA into RNA using the four ribonucleoside triphosphates as substrates. The sequence is that of DNA-directed RNA polymerase subunit beta from Bradyrhizobium diazoefficiens (strain JCM 10833 / BCRC 13528 / IAM 13628 / NBRC 14792 / USDA 110).